A 702-amino-acid chain; its full sequence is 1,4-alpha-glucan-branching enzyme (702 aa).

Ala-2 bears the N-acetylalanine mark. Substrate-binding positions include 62-63 (NE) and 91-93 (WAP). Trp-107 lines the (1,4-alpha-D-glucosyl)n pocket. 118-121 (EYGK) lines the substrate pocket. Residue Lys-143 coordinates (1,4-alpha-D-glucosyl)n. Tyr-173 is subject to Phosphotyrosine. Substrate is bound at residue 333–336 (EVLR). Asp-357 functions as the Nucleophile in the catalytic mechanism. Glu-412 (proton donor) is an active-site residue.

It belongs to the glycosyl hydrolase 13 family. GlgB subfamily. As to quaternary structure, monomer.

The enzyme catalyses Transfers a segment of a (1-&gt;4)-alpha-D-glucan chain to a primary hydroxy group in a similar glucan chain.. It participates in glycan biosynthesis; glycogen biosynthesis. Glycogen-branching enzyme participates in the glycogen biosynthetic process along with glycogenin and glycogen synthase. Generates alpha-1,6-glucosidic branches from alpha-1,4-linked glucose chains, to increase solubility of the glycogen polymer. This chain is 1,4-alpha-glucan-branching enzyme (Gbe1), found in Mus musculus (Mouse).